Reading from the N-terminus, the 333-residue chain is Dehydrodolichyl diphosphate synthase complex subunit Dhdds (333 aa).

5 residues coordinate (2E,6E)-farnesyl diphosphate: Asp34, Gly35, Arg37, Arg38, and Arg85. A Mg(2+)-binding site is contributed by Asp34. Isopentenyl diphosphate is bound by residues Arg38, Arg85, Arg205, Arg211, and Ser213.

This sequence belongs to the UPP synthase family. The active dehydrodolichyl diphosphate synthase complex is a heterotetramer composed of a dimer of heterodimer of DHDDS and NUS1. Interacts with NPC2. Mg(2+) is required as a cofactor.

The protein resides in the endoplasmic reticulum membrane. It catalyses the reaction n isopentenyl diphosphate + (2E,6E)-farnesyl diphosphate = a di-trans,poly-cis-polyprenyl diphosphate + n diphosphate. It participates in protein modification; protein glycosylation. It functions in the pathway lipid metabolism. In terms of biological role, with NUS1, forms the dehydrodolichyl diphosphate synthase (DDS) complex, an essential component of the dolichol monophosphate (Dol-P) biosynthetic machinery. Both subunits contribute to enzymatic activity, i.e. condensation of multiple copies of isopentenyl pyrophosphate (IPP) to farnesyl pyrophosphate (FPP) to produce dehydrodolichyl diphosphate (Dedol-PP), a precursor of dolichol phosphate which is utilized as a sugar carrier in protein glycosylation in the endoplasmic reticulum (ER). Synthesizes long-chain polyprenols, mostly of C95 and C100 chain length. Regulates the glycosylation and stability of nascent NPC2, thereby promoting trafficking of LDL-derived cholesterol. The protein is Dehydrodolichyl diphosphate synthase complex subunit Dhdds of Mus musculus (Mouse).